A 247-amino-acid polypeptide reads, in one-letter code: Serine/threonine-protein phosphatase 2A activator (247 aa).

It belongs to the PTPA-type PPIase family.

Its subcellular location is the cytoplasm. It carries out the reaction [protein]-peptidylproline (omega=180) = [protein]-peptidylproline (omega=0). Its function is as follows. PPIases accelerate the folding of proteins. It catalyzes the cis-trans isomerization of proline imidic peptide bonds in oligopeptides. Acts as a regulatory subunit for PP2A-like phosphatases modulating their activity or substrate specificity, probably by inducing a conformational change in the catalytic subunit, a direct target of the PPIase. Can reactivate inactive phosphatase PP2A-phosphatase methylesterase complexes (PP2Ai) in presence of ATP and Mg(2+) by dissociating the inactive form from the complex. This Encephalitozoon cuniculi (strain GB-M1) (Microsporidian parasite) protein is Serine/threonine-protein phosphatase 2A activator.